We begin with the raw amino-acid sequence, 221 residues long: Kinetochore protein Spc25 (221 aa).

Residues 63-114 adopt a coiled-coil conformation; the sequence is VIQRREEMEKRVSFMEELAQEVEATKQRNLVMREQIKQQKMLVRQRKNEIME.

The protein belongs to the SPC25 family. As to quaternary structure, component of the Ndc80 complex, which is composed of Ndc80, Nuf2 and Spc25.

It localises to the nucleus. Its subcellular location is the chromosome. The protein resides in the centromere. The protein localises to the kinetochore. Its function is as follows. Acts as a component of the essential kinetochore-associated Ndc80 complex, which is required for chromosome segregation and spindle checkpoint activity during meiosis and mitosis. Required for kinetochore integrity and the organization of stable microtubule binding sites in the outer plate of the kinetochore. Participates in SAC signaling that responds specifically to disruptions in spindle microtubule dynamics. The NDC80 complex synergistically enhances the affinity of the SKA1 complex for microtubules and may allow the NDC80 complex to track depolymerizing microtubules. This Drosophila eugracilis (Fruit fly) protein is Kinetochore protein Spc25.